Reading from the N-terminus, the 827-residue chain is MAGQAASKRRLISRSLQSADICLQHQDYGTAYAHLLLVLTLAPEQKEALKEMFQYSLFKWAEELYALNRSQDLFNCYEQALELFPIDDVICNSMGEHLFRLGFRDEAAGYFYKALKLNPSSAEAKENFYRVANWLIERWHFIMLNDTKRNLMYRAAIQNAIQNGCKTVLDIGTGTGILSMFAKKAGAPFVYACELSKTMYELACEIVTANQMDGHIKLLHMKSHDIQIPEHIPERVSLVVTETVDAGLFGEGIVETLIHAWKNLLLQPKPKDGRVEAYGKVIPSSAVIYGMAVECPEIRRHYSVGVTEVAGIKLGDAVKFCSPIHSSHGPDDVTEPYTTEKMSRVPGGYKALSQPFQVMTVDFNSLQALEYIASGKSNRISVPVYQQGQFDCFITWFALQLDNEHSLSTEPSEETCWEQAVFPVQKLPDEGCLVNTGDTIVVDVSCPDCYLRLDLSTIVLSESSCDQTENMVMGNETDICDALANLHTTTNKGNMQELCILEPGEIALLNNAVYHESFMAAISKVIGSLELKESCSVVRNSQEQDVNFAQPVSEDRLHVLDVSEGFSILPLIAAKLGKVKAFSSVEKEQHRVALEKLSVINDLNNNESLEFCLSQLETDDGAAQKPKSDKMWSIIILDVIETCGLIRQDLLEKAAIARCLLEPGGKIFPHAVVMQGMLIESKTLLHEGSVQGNEPTLGFLIAPFINRFKVPAHVFLNLSTVPCIPLSEQFELLRLDLMNPCSNNQSSSVMRIKVNICRSGQVTAVTFWYHIHIDEAISLDTSSEASHWKQAAYVLETPTCVLEGEELLLEVQFQNSSMSMKLTRPLQ.

TPR repeat units follow at residues 54-87 and 88-121; these read QYSLFKWAEELYALNRSQDLFNCYEQALELFPID and DVICNSMGEHLFRLGFRDEAAGYFYKALKLNPSS. SAM-dependent MTase PRMT-type domains are found at residues 124–453 and 511–827; these read AKEN…YLRL and NAVY…RPLQ.

This sequence belongs to the class I-like SAM-binding methyltransferase superfamily. Protein arginine N-methyltransferase family.

It is found in the cytoplasm. The enzyme catalyses L-arginyl-[protein] + 2 S-adenosyl-L-methionine = N(omega),N(omega)'-dimethyl-L-arginyl-[protein] + 2 S-adenosyl-L-homocysteine + 2 H(+). Arginine methyltransferase that can both catalyze the formation of omega-N monomethylarginine (MMA) and symmetrical dimethylarginine (sDMA). The sequence is that of Protein arginine N-methyltransferase 9 (prmt9) from Xenopus laevis (African clawed frog).